A 1183-amino-acid polypeptide reads, in one-letter code: 3-hydroxy-3-methylglutaryl-coenzyme A reductase (1183 aa).

The Cytoplasmic portion of the chain corresponds to 1–245 (MAAILLPQRF…DLLKNAETLD (245 aa)). Residues 245 to 426 (DIVIMLLGYI…FTFYTAILSI (182 aa)) form the SSD domain. The chain crosses the membrane as a helical span at residues 246 to 266 (IVIMLLGYIAMHLTFVSLFLS). Residues 267–273 (MRKMGSK) are Lumenal-facing. A helical membrane pass occupies residues 274 to 294 (FWLGICTLFSSVFAFLFGLVV). Topologically, residues 295–299 (TTKLG) are cytoplasmic. Residues 300–320 (VPISVILLSEGLPFLVVTIGF) form a helical membrane-spanning segment. At 321-378 (EKNIVLTRAVMSHAIEHRRIQAQNSKSGKRSPERSTQNMIQYAVQAAIKEKGFEIIRD) the chain is on the lumenal side. The chain crosses the membrane as a helical span at residues 379-399 (YAIEIVILVIGAASGVQGGLQ). The Cytoplasmic segment spans residues 400–402 (QFC). A helical transmembrane segment spans residues 403-423 (FLAAWTLFFDFILLFTFYTAI). The Lumenal portion of the chain corresponds to 424 to 482 (LSIKLEINRIKRHVDMRMALEDDGVSRRVAENVAKGDDELNRVRGDAPLFGRKSSSIPK). A helical membrane pass occupies residues 483–503 (FKVLMILGFIFVNIVNICSIP). Residues 504–1183 (FRNPSSMSTI…SAAAIQRSKR (680 aa)) lie on the Cytoplasmic side of the membrane. Catalysis depends on glutamate 828, which acts as the Charge relay system. 834 to 840 (SASRGCK) provides a ligand contact to CoA. Residues 895-897 (SRF) and 922-930 (DAMGMNMIS) each bind NADP(+). Catalysis depends on lysine 962, which acts as the Charge relay system. 991-993 (VLK) provides a ligand contact to CoA. The active-site Charge relay system is aspartate 1038. Residue 1133–1134 (AH) participates in CoA binding. Catalysis depends on histidine 1134, which acts as the Proton donor. The segment at 1136–1183 (QHNRSAAPSRSTTPAPPMTPVSLAMTSAQERSASTTSMSAAAIQRSKR) is disordered. An NADP(+)-binding site is contributed by 1138-1139 (NR). Composition is skewed to low complexity over residues 1139–1148 (RSAAPSRSTT) and 1167–1177 (SASTTSMSAAA).

Belongs to the HMG-CoA reductase family.

The protein resides in the endoplasmic reticulum membrane. The catalysed reaction is (R)-mevalonate + 2 NADP(+) + CoA = (3S)-3-hydroxy-3-methylglutaryl-CoA + 2 NADPH + 2 H(+). Its pathway is metabolic intermediate biosynthesis; (R)-mevalonate biosynthesis; (R)-mevalonate from acetyl-CoA: step 3/3. Its function is as follows. HMG-CoA reductase; part of the first module of ergosterol biosynthesis pathway that includes the early steps of the pathway, conserved across all eukaryotes, and which results in the formation of mevalonate from acetyl-coenzyme A (acetyl-CoA). In this module, the cytosolic acetyl-CoA acetyltransferase catalyzes the formation of acetoacetyl-CoA. The hydroxymethylglutaryl-CoA synthase then condenses acetyl-CoA with acetoacetyl-CoA to form HMG-CoA. The rate-limiting step of the early module is the reduction to mevalonate by the 3-hydroxy-3-methylglutaryl-coenzyme A (HMG-CoA) reductase HMGR. This is 3-hydroxy-3-methylglutaryl-coenzyme A reductase (HMGR) from Gibberella fujikuroi (strain CBS 195.34 / IMI 58289 / NRRL A-6831) (Bakanae and foot rot disease fungus).